The primary structure comprises 348 residues: Phosphoribosylformylglycinamidine cyclo-ligase (348 aa).

Belongs to the AIR synthase family.

It localises to the cytoplasm. It carries out the reaction 2-formamido-N(1)-(5-O-phospho-beta-D-ribosyl)acetamidine + ATP = 5-amino-1-(5-phospho-beta-D-ribosyl)imidazole + ADP + phosphate + H(+). Its pathway is purine metabolism; IMP biosynthesis via de novo pathway; 5-amino-1-(5-phospho-D-ribosyl)imidazole from N(2)-formyl-N(1)-(5-phospho-D-ribosyl)glycinamide: step 2/2. This Cereibacter sphaeroides (strain ATCC 17023 / DSM 158 / JCM 6121 / CCUG 31486 / LMG 2827 / NBRC 12203 / NCIMB 8253 / ATH 2.4.1.) (Rhodobacter sphaeroides) protein is Phosphoribosylformylglycinamidine cyclo-ligase.